A 271-amino-acid polypeptide reads, in one-letter code: Aspartate/glutamate leucyltransferase (271 aa).

It belongs to the R-transferase family. Bpt subfamily.

The protein resides in the cytoplasm. The enzyme catalyses N-terminal L-glutamyl-[protein] + L-leucyl-tRNA(Leu) = N-terminal L-leucyl-L-glutamyl-[protein] + tRNA(Leu) + H(+). It carries out the reaction N-terminal L-aspartyl-[protein] + L-leucyl-tRNA(Leu) = N-terminal L-leucyl-L-aspartyl-[protein] + tRNA(Leu) + H(+). Functionally, functions in the N-end rule pathway of protein degradation where it conjugates Leu from its aminoacyl-tRNA to the N-termini of proteins containing an N-terminal aspartate or glutamate. This Acinetobacter baumannii (strain SDF) protein is Aspartate/glutamate leucyltransferase.